We begin with the raw amino-acid sequence, 137 residues long: ATP synthase epsilon chain 1 (137 aa).

It belongs to the ATPase epsilon chain family. As to quaternary structure, F-type ATPases have 2 components, CF(1) - the catalytic core - and CF(0) - the membrane proton channel. CF(1) has five subunits: alpha(3), beta(3), gamma(1), delta(1), epsilon(1). CF(0) has three main subunits: a, b and c.

Its subcellular location is the cell inner membrane. Its function is as follows. Produces ATP from ADP in the presence of a proton gradient across the membrane. This chain is ATP synthase epsilon chain 1 (atpC1), found in Ralstonia nicotianae (strain ATCC BAA-1114 / GMI1000) (Ralstonia solanacearum).